Consider the following 41-residue polypeptide: Phospholipase A2 homolog nigroviriditoxin acidic subunit A (41 aa).

It belongs to the phospholipase A2 family. Group II subfamily. D49 sub-subfamily. As to quaternary structure, nigroviriditoxin is a heterodimer of an acidic subunit A and a basic subunit B. In terms of tissue distribution, expressed by the venom gland.

Its subcellular location is the secreted. Functionally, heterodimer A-B: Nigroviriditoxin possesses phospholipase A2 (PLA2) activity. It consists of a non-covalent association of a basic PLA2 subunit B with a non-enzymatic subunit A. Its function is as follows. Subunit A: The acidic subunit of nigroviriditoxin probably is a heterotrimer of three disulfide-linked chains generated by post-translational maturation of a PLA2-like precursor. It appears to have no PLA2 activity of its own, instead inhibiting the catalytic activity of subunit B. It is not toxic to mice by itself but increases toxicity of subunit B. This Bothriechis nigroviridis (Black-speckled palm pit viper) protein is Phospholipase A2 homolog nigroviriditoxin acidic subunit A.